The following is a 132-amino-acid chain: Small ribosomal subunit protein uS8 (132 aa).

It belongs to the universal ribosomal protein uS8 family. In terms of assembly, part of the 30S ribosomal subunit. Contacts proteins S5 and S12.

In terms of biological role, one of the primary rRNA binding proteins, it binds directly to 16S rRNA central domain where it helps coordinate assembly of the platform of the 30S subunit. This is Small ribosomal subunit protein uS8 from Rhizobium meliloti (strain 1021) (Ensifer meliloti).